The chain runs to 337 residues: tRNA N6-adenosine threonylcarbamoyltransferase (337 aa).

Residues His111 and His115 each coordinate Fe cation. Substrate contacts are provided by residues Leu134–Gly138, Asp167, Gly180, and Asn272. Residue Asp300 coordinates Fe cation.

It belongs to the KAE1 / TsaD family. The cofactor is Fe(2+).

It localises to the cytoplasm. It carries out the reaction L-threonylcarbamoyladenylate + adenosine(37) in tRNA = N(6)-L-threonylcarbamoyladenosine(37) in tRNA + AMP + H(+). Its function is as follows. Required for the formation of a threonylcarbamoyl group on adenosine at position 37 (t(6)A37) in tRNAs that read codons beginning with adenine. Is involved in the transfer of the threonylcarbamoyl moiety of threonylcarbamoyl-AMP (TC-AMP) to the N6 group of A37, together with TsaE and TsaB. TsaD likely plays a direct catalytic role in this reaction. The protein is tRNA N6-adenosine threonylcarbamoyltransferase of Erwinia tasmaniensis (strain DSM 17950 / CFBP 7177 / CIP 109463 / NCPPB 4357 / Et1/99).